The sequence spans 182 residues: MGLRPAKIDRDVDKPAYTRREYIRGAPGPKITIFDMGNLSAEFEYEVSLHAEQAMQIRQNALEAIRIQVNRYLQKNVGRSNYHFKIRVYPFQVLRENPMATGRKADRYGNGMRRPFGKPIGLAARVRKDQKILTVWVNGQHLKFALGAMHRAKMKLPYSAYYRIYDKEGNDVTTKVLSTMKL.

This sequence belongs to the universal ribosomal protein uL16 family. As to quaternary structure, part of the 50S ribosomal subunit.

The sequence is that of Large ribosomal subunit protein uL16 from Thermococcus kodakarensis (strain ATCC BAA-918 / JCM 12380 / KOD1) (Pyrococcus kodakaraensis (strain KOD1)).